Here is a 589-residue protein sequence, read N- to C-terminus: CTP synthase (589 aa).

Positions 1 to 281 (MPQSRTHSRT…DAYVVRQLGL (281 aa)) are amidoligase domain. S23 contributes to the CTP binding site. UTP is bound at residue S23. ATP is bound by residues 24–29 (SLGKGL) and D81. Positions 81 and 155 each coordinate Mg(2+). Residues 162–164 (DIE), 202–207 (KTKPTQ), and K238 contribute to the CTP site. Residues 202 to 207 (KTKPTQ) and K238 each bind UTP. The Glutamine amidotransferase type-1 domain maps to 306–554 (RIALVGKYVD…VDAALRHKLE (249 aa)). L-glutamine is bound at residue G369. C396 (nucleophile; for glutamine hydrolysis) is an active-site residue. L-glutamine contacts are provided by residues 397-400 (LGLQ), E419, and R480. Active-site residues include H527 and E529. The disordered stretch occupies residues 562–589 (HGEERAAADDEIAESADRDEVASVDSAG).

Belongs to the CTP synthase family. As to quaternary structure, homotetramer.

It carries out the reaction UTP + L-glutamine + ATP + H2O = CTP + L-glutamate + ADP + phosphate + 2 H(+). It catalyses the reaction L-glutamine + H2O = L-glutamate + NH4(+). The catalysed reaction is UTP + NH4(+) + ATP = CTP + ADP + phosphate + 2 H(+). It participates in pyrimidine metabolism; CTP biosynthesis via de novo pathway; CTP from UDP: step 2/2. Its activity is regulated as follows. Allosterically activated by GTP, when glutamine is the substrate; GTP has no effect on the reaction when ammonia is the substrate. The allosteric effector GTP functions by stabilizing the protein conformation that binds the tetrahedral intermediate(s) formed during glutamine hydrolysis. Inhibited by the product CTP, via allosteric rather than competitive inhibition. Functionally, catalyzes the ATP-dependent amination of UTP to CTP with either L-glutamine or ammonia as the source of nitrogen. Regulates intracellular CTP levels through interactions with the four ribonucleotide triphosphates. The protein is CTP synthase of Rhodococcus opacus (strain B4).